The following is a 445-amino-acid chain: Chromosomal replication initiator protein DnaA (445 aa).

The domain I, interacts with DnaA modulators stretch occupies residues 1–69; that stretch reads MEKIWLEAQS…IEAISSLTNI (69 aa). The segment at 69-108 is domain II; it reads IKYQVDFKITEKSQVEKKKVDLQATEKIENDSTRNVDFNT. The interval 109 to 325 is domain III, AAA+ region; it reads NLNPKYTFDS…GMLIRLGAYA (217 aa). The ATP site is built by G153, G155, K156, and T157. The interval 326-445 is domain IV, binds dsDNA; it reads SLTGSEISLN…VEKMKKELMS (120 aa).

It belongs to the DnaA family. In terms of assembly, oligomerizes as a right-handed, spiral filament on DNA at oriC.

It is found in the cytoplasm. Plays an essential role in the initiation and regulation of chromosomal replication. ATP-DnaA binds to the origin of replication (oriC) to initiate formation of the DNA replication initiation complex once per cell cycle. Binds the DnaA box (a 9 base pair repeat at the origin) and separates the double-stranded (ds)DNA. Forms a right-handed helical filament on oriC DNA; dsDNA binds to the exterior of the filament while single-stranded (ss)DNA is stabiized in the filament's interior. The ATP-DnaA-oriC complex binds and stabilizes one strand of the AT-rich DNA unwinding element (DUE), permitting loading of DNA polymerase. After initiation quickly degrades to an ADP-DnaA complex that is not apt for DNA replication. Binds acidic phospholipids. The protein is Chromosomal replication initiator protein DnaA of Geotalea daltonii (strain DSM 22248 / JCM 15807 / FRC-32) (Geobacter daltonii).